The chain runs to 347 residues: Lipoyl synthase (347 aa).

Residues Cys-77, Cys-82, Cys-88, Cys-103, Cys-107, Cys-110, and Ser-317 each coordinate [4Fe-4S] cluster. Residues 89-306 (FADGTATFMI…MDYGKKIGFF (218 aa)) enclose the Radical SAM core domain.

It belongs to the radical SAM superfamily. Lipoyl synthase family. [4Fe-4S] cluster is required as a cofactor.

It is found in the cytoplasm. It carries out the reaction [[Fe-S] cluster scaffold protein carrying a second [4Fe-4S](2+) cluster] + N(6)-octanoyl-L-lysyl-[protein] + 2 oxidized [2Fe-2S]-[ferredoxin] + 2 S-adenosyl-L-methionine + 4 H(+) = [[Fe-S] cluster scaffold protein] + N(6)-[(R)-dihydrolipoyl]-L-lysyl-[protein] + 4 Fe(3+) + 2 hydrogen sulfide + 2 5'-deoxyadenosine + 2 L-methionine + 2 reduced [2Fe-2S]-[ferredoxin]. Its pathway is protein modification; protein lipoylation via endogenous pathway; protein N(6)-(lipoyl)lysine from octanoyl-[acyl-carrier-protein]: step 2/2. Catalyzes the radical-mediated insertion of two sulfur atoms into the C-6 and C-8 positions of the octanoyl moiety bound to the lipoyl domains of lipoate-dependent enzymes, thereby converting the octanoylated domains into lipoylated derivatives. The protein is Lipoyl synthase of Psychrobacter arcticus (strain DSM 17307 / VKM B-2377 / 273-4).